A 205-amino-acid chain; its full sequence is Ribosomal RNA small subunit methyltransferase G (205 aa).

Residues G76, L81, 127-128 (IE), and R140 contribute to the S-adenosyl-L-methionine site.

Belongs to the methyltransferase superfamily. RNA methyltransferase RsmG family.

The protein resides in the cytoplasm. It carries out the reaction guanosine(527) in 16S rRNA + S-adenosyl-L-methionine = N(7)-methylguanosine(527) in 16S rRNA + S-adenosyl-L-homocysteine. Specifically methylates the N7 position of guanine in position 527 of 16S rRNA. This chain is Ribosomal RNA small subunit methyltransferase G, found in Francisella tularensis subsp. tularensis (strain WY96-3418).